The following is an 85-amino-acid chain: Large ribosomal subunit protein bL27 (85 aa).

The interval 1 to 22 is disordered; sequence MAHKKGVGSTRNGRDSESKRLG.

This sequence belongs to the bacterial ribosomal protein bL27 family.

The polypeptide is Large ribosomal subunit protein bL27 (Geobacter metallireducens (strain ATCC 53774 / DSM 7210 / GS-15)).